The following is a 154-amino-acid chain: MVKAVCVLRGDAKVGGTVTFEQESESAPTTITYDLTGNDPNAERGFHIHTFGDNTNGCTSAGPHFNPHGKTHGAPTDAARHVGDLGNVKTDAQGNAKGSIQDSQVKLIGPHSVIGRTVVVHAGTDDLGKGGNEESLKTGNAGPRPACGVIGVAN.

Residues His-47, His-49, and His-64 each coordinate Cu cation. A disulfide bridge connects residues Cys-58 and Cys-147. Positions 64, 72, 81, and 84 each coordinate Zn(2+). His-121 provides a ligand contact to Cu cation. A compositionally biased stretch (basic and acidic residues) spans 125–136 (DDLGKGGNEESL). The tract at residues 125–144 (DDLGKGGNEESLKTGNAGPR) is disordered. Arg-144 serves as a coordination point for substrate.

It belongs to the Cu-Zn superoxide dismutase family. Homodimer. It depends on Cu cation as a cofactor. The cofactor is Zn(2+).

It is found in the cytoplasm. It catalyses the reaction 2 superoxide + 2 H(+) = H2O2 + O2. Its function is as follows. Destroys radicals which are normally produced within the cells and which are toxic to biological systems. The sequence is that of Superoxide dismutase [Cu-Zn] (SOD1) from Cordyceps tenuipes (Entomopathogenic fungus).